The following is a 2769-amino-acid chain: Thyroglobulin (2769 aa).

The N-terminal stretch at 1–19 (MALALWVFGLLDLICLASA) is a signal peptide. Tyrosine 24 is modified (iodotyrosine; alternate). Sulfotyrosine; alternate is present on tyrosine 24. Tyrosine 24 is subject to Thyroxine; alternate. At tyrosine 24 the chain carries Triiodothyronine; alternate. 4 consecutive Thyroglobulin type-1 domains span residues 31-92 (LRPC…PAAC), 93-160 (LSFC…PARC), 161-297 (PRSC…RFRC), and 298-358 (PTKC…PPSC). 8 disulfides stabilise this stretch: cysteine 34-cysteine 52, cysteine 63-cysteine 70, cysteine 72-cysteine 92, cysteine 96-cysteine 120, cysteine 131-cysteine 138, cysteine 140-cysteine 160, cysteine 164-cysteine 183, and cysteine 194-cysteine 235. An Iodotyrosine modification is found at tyrosine 108. A glycan (N-linked (GlcNAc...) (complex) asparagine; alternate) is linked at asparagine 110. N-linked (GlcNAc...) (hybrid) asparagine; alternate glycosylation is present at asparagine 110. Tyrosine 149 carries the iodotyrosine; alternate modification. Tyrosine 149 bears the Diiodotyrosine; alternate mark. 2 positions are modified to iodotyrosine: tyrosine 234 and tyrosine 258. 9 disulfide bridges follow: cysteine 301–cysteine 319, cysteine 330–cysteine 336, cysteine 338–cysteine 358, cysteine 364–cysteine 619, cysteine 408–cysteine 607, cysteine 630–cysteine 635, cysteine 637–cysteine 657, cysteine 661–cysteine 686, and cysteine 697–cysteine 702. N-linked (GlcNAc...) (complex) asparagine; alternate glycosylation is found at asparagine 483 and asparagine 495. Asparagine 483 and asparagine 495 each carry an N-linked (GlcNAc...) (hybrid) asparagine; alternate glycan. Thyroglobulin type-1 domains are found at residues 604–657 (SQGC…RPRC), 658–725 (PTEC…PKKC), 726–921 (PSPC…VPAC), 922–1073 (PGSC…IPQC), 1074–1145 (PTSC…SAQC), and 1146–1210 (PSLC…QPAC). Tyrosine 703 carries the post-translational modification Iodotyrosine; alternate. Residue tyrosine 703 is modified to Thyroxine; alternate. Tyrosine 703 is modified (triiodothyronine; alternate). A Diiodotyrosine; alternate modification is found at tyrosine 703. 16 cysteine pairs are disulfide-bonded: cysteine 704–cysteine 725, cysteine 729–cysteine 762, cysteine 773–cysteine 898, cysteine 900–cysteine 921, cysteine 925–cysteine 1031, cysteine 1042–cysteine 1049, cysteine 1051–cysteine 1073, cysteine 1077–cysteine 1108, cysteine 1126–cysteine 1145, cysteine 1149–cysteine 1169, cysteine 1181–cysteine 1188, cysteine 1190–cysteine 1210, cysteine 1215–cysteine 1264, cysteine 1231–cysteine 1245, cysteine 1306–cysteine 1356, and cysteine 1331–cysteine 1347. The residue at position 784 (tyrosine 784) is an Iodotyrosine. Residue asparagine 853 is glycosylated (N-linked (GlcNAc...) (complex) asparagine; alternate). Asparagine 853 carries an N-linked (GlcNAc...) (hybrid) asparagine; alternate glycan. Tyrosine 866 carries the iodotyrosine; alternate modification. Tyrosine 866 carries the post-translational modification Diiodotyrosine; alternate. Tyrosine 883 is modified (diiodotyrosine). Asparagine 947 carries an N-linked (GlcNAc...) (complex) asparagine; alternate glycan. Asparagine 947 carries an N-linked (GlcNAc...) (hybrid) asparagine; alternate glycan. Position 992 is an iodotyrosine; alternate (tyrosine 992). Tyrosine 992 carries the diiodotyrosine; alternate modification. A glycan (N-linked (GlcNAc...) (complex) asparagine; alternate) is linked at asparagine 1140. N-linked (GlcNAc...) (hybrid) asparagine; alternate glycosylation occurs at asparagine 1140. Tyrosine 1310 is subject to Iodotyrosine. Residue tyrosine 1310 is modified to Thyroxine. Asparagine 1365 is a glycosylation site (N-linked (GlcNAc...) (high mannose) asparagine). Cystine bridges form between cysteine 1441–cysteine 1461, cysteine 1464–cysteine 1475, cysteine 1478–cysteine 1492, cysteine 1495–cysteine 1512, cysteine 1516–cysteine 1525, cysteine 1545–cysteine 1567, cysteine 1605–cysteine 1629, cysteine 1609–cysteine 1615, cysteine 1641–cysteine 1664, cysteine 1726–cysteine 1751, cysteine 1730–cysteine 1736, cysteine 1735–cysteine 1836, and cysteine 1762–cysteine 1779. Type II repeat units follow at residues 1458-1471 (ALGC…SYFQ), 1472-1488 (DEQC…EQAG), and 1489-1505 (SLAC…VYAG). Tyrosine 1469 carries the post-translational modification Iodotyrosine; alternate. Tyrosine 1469 carries the post-translational modification Diiodotyrosine; alternate. In terms of domain architecture, Thyroglobulin type-1 11 spans 1513–1567 (VTDCQKNEVGLQCDQDSQYRASQRDRTSGKAFCVDGEGRRLPWTEAEAPLVDAQC). A Type IIIA repeat occupies 1605–1725 (CLADCALDEA…GASLAEVHLF (121 aa)). The Type IIIB repeat unit spans residues 1726–1893 (CLLACDHDSC…LFSLQQANLW (168 aa)). Asparagine 1776 carries an N-linked (GlcNAc...) (complex) asparagine; alternate glycan. Residue asparagine 1776 is glycosylated (N-linked (GlcNAc...) (hybrid) asparagine; alternate). Basic and acidic residues predominate over residues 1827–1842 (MGSRSESMGCRRDTEP). The interval 1827–1851 (MGSRSESMGCRRDTEPRPASPSETD) is disordered. The N-linked (GlcNAc...) (complex) asparagine; alternate glycan is linked to asparagine 1870. N-linked (GlcNAc...) (hybrid) asparagine; alternate glycosylation is present at asparagine 1870. 7 disulfide bridges follow: cysteine 1894/cysteine 1920, cysteine 1898/cysteine 1905, cysteine 1929/cysteine 1940, cysteine 1997/cysteine 2025, cysteine 2001/cysteine 2007, cysteine 2006/cysteine 2077, and cysteine 2036/cysteine 2049. One copy of the Type IIIA repeat lies at 1894 to 1996 (CLSRCAGEPS…DKSISSGFFE (103 aa)). A Type IIIB repeat occupies 1997–2130 (CERLCDMDPC…VGNFSAARDR (134 aa)). The N-linked (GlcNAc...) (high mannose) asparagine glycan is linked to asparagine 2014. N-linked (GlcNAc...) (high mannose) asparagine glycosylation occurs at asparagine 2123. 3 disulfides stabilise this stretch: cysteine 2131-cysteine 2155, cysteine 2135-cysteine 2141, and cysteine 2164-cysteine 2173. The Type IIIA repeat unit spans residues 2131–2188 (CLWECSRHQDCLVTTLQTQPGAVRCMFYADTQSCTHSLQAQNCRLLLHEEATYIYRKP). Iodotyrosine is present on tyrosine 2185. The cholinesterase-like (ChEL) stretch occupies residues 2189 to 2769 (NIPLPGFGTS…PELASKTYSK (581 aa)). The N-linked (GlcNAc...) (complex) asparagine; alternate glycan is linked to asparagine 2251. Asparagine 2251 carries N-linked (GlcNAc...) (hybrid) asparagine; alternate glycosylation. A glycan (N-linked (GlcNAc...) (high mannose) asparagine) is linked at asparagine 2296. Cysteine 2443 and cysteine 2454 form a disulfide bridge. Tyrosine 2541 is modified (thyroxine). Tyrosine 2574 bears the Iodotyrosine; alternate mark. The residue at position 2574 (tyrosine 2574) is a Thyroxine; alternate. Triiodothyronine; alternate is present on tyrosine 2574. The residue at position 2574 (tyrosine 2574) is a Diiodotyrosine; alternate. Tyrosine 2588 and tyrosine 2618 each carry iodotyrosine. Cysteine 2592 and cysteine 2716 are disulfide-bonded. Tyrosine 2698 is subject to Diiodotyrosine. The tract at residues 2730–2769 (ADETKDGPSADSEEEDQPAGSGLTEDLLGLPELASKTYSK) is disordered. Tyrosine 2767 carries the post-translational modification Iodotyrosine; alternate. Tyrosine 2767 is modified (thyroxine; alternate). Tyrosine 2767 is modified (triiodothyronine; alternate). Tyrosine 2767 is subject to Diiodotyrosine; alternate.

Belongs to the type-B carboxylesterase/lipase family. Monomer. Homodimer (via ChEL region); occurs in the endoplasmic reticulum and is required for export to the Golgi apparatus. Homooligomer; disulfide-linked; stored in this form in the thyroid follicle lumen. Iodinated on tyrosine residues by TPO. There are 4 pairs of iodinated tyrosines used for coupling: acceptor Tyr-24 is coupled to donor Tyr-149 or Tyr-234, acceptor Tyr-2574 is coupled to donor Tyr-2541, acceptor Tyr-2767 in monomer 1 is coupled to donor Tyr-2767 in monomer 2 and acceptor Tyr-1310 in monomer 1 is coupled to donor Tyr-108 in monomer 2. Post-translationally, sulfated tyrosines are desulfated during iodination. In terms of processing, undergoes sequential proteolysis by cathepsins to release thyroxine (T4) and triiodothyronine (T3) hormones. In the thyroid follicle lumen, cross-linked TG (storage form) is solubilized by limited proteolysis mediated by cathepsins CTSB and/or CTSL. Partially cleaved TG is further processed by CTSK/cathepsin K and/or CTSL resulting in the release of T4. Following endocytosis, further processing occurs leading to the release of T3 and more T4 hormones. In terms of tissue distribution, specifically expressed in the thyroid gland.

It is found in the secreted. In terms of biological role, acts as a substrate for the production of iodinated thyroid hormones thyroxine (T4) and triiodothyronine (T3). The synthesis of T3 and T4 involves iodination of selected tyrosine residues of TG/thyroglobulin followed by their oxidative coupling. Following TG re-internalization and lysosomal-mediated proteolysis, T3 and T4 are released from the polypeptide backbone leading to their secretion into the bloodstream. One dimer produces 7 thyroid hormone molecules. In Bos taurus (Bovine), this protein is Thyroglobulin (TG).